We begin with the raw amino-acid sequence, 811 residues long: Probable phosphoketolase (811 aa).

This sequence belongs to the XFP family. It depends on thiamine diphosphate as a cofactor.

This Methylococcus capsulatus (strain ATCC 33009 / NCIMB 11132 / Bath) protein is Probable phosphoketolase.